Reading from the N-terminus, the 320-residue chain is MIFITLEHILAHISFSLILVVTLIYWGTLVYRIEGLSSSGGKGMIVTFLCTTGLLINRWLYSGHLPLSNLYESFMFLSWSSSVFHILLEVRSRDDRWLGAITAPSAMLTHGFATLGLPEEMQRSGMLVPALQSHWSMMHVSMILFSYATLLCGSLASIALLVIMSGVNRQVIFGAMDNLFSRAILPNENFYSHEKQKSDLQYTVYFSSTNYRKCQLIKQLDHWSYRAIGLGFSLSTIGTLSGAIWANEAWGSYWSWDPKETWALITWTIFAIYLHTRMNKGWQGEEPAIVASLGFFIVWIRYLGVNLLGIGLHSYGWLEP.

The next 8 membrane-spanning stretches (helical) occupy residues 9–29, 36–56, 70–90, 97–117, 143–163, 227–247, 254–274, and 288–308; these read ILAH…WGTL, LSSS…GLLI, LYES…LLEV, WLGA…TLGL, ILFS…LLVI, AIGL…IWAN, WSWD…AIYL, and AIVA…VNLL.

This sequence belongs to the CcmF/CycK/Ccl1/NrfE/CcsA family. As to quaternary structure, may interact with Ccs1.

The protein localises to the plastid. The protein resides in the chloroplast thylakoid membrane. In terms of biological role, required during biogenesis of c-type cytochromes (cytochrome c6 and cytochrome f) at the step of heme attachment. The chain is Cytochrome c biogenesis protein CcsA from Pinus thunbergii (Japanese black pine).